The following is a 106-amino-acid chain: Pyruvate decarboxylase 2 (106 aa).

Mg(2+) is bound by residues Asn-10 and Gly-12.

Belongs to the TPP enzyme family. In terms of assembly, homotetramer. A metal cation serves as cofactor. Thiamine diphosphate is required as a cofactor.

It catalyses the reaction a 2-oxocarboxylate + H(+) = an aldehyde + CO2. The polypeptide is Pyruvate decarboxylase 2 (PDC2) (Zea mays (Maize)).